A 466-amino-acid polypeptide reads, in one-letter code: Asparagine--tRNA ligase (466 aa).

The protein belongs to the class-II aminoacyl-tRNA synthetase family. Homodimer.

The protein resides in the cytoplasm. The enzyme catalyses tRNA(Asn) + L-asparagine + ATP = L-asparaginyl-tRNA(Asn) + AMP + diphosphate + H(+). The protein is Asparagine--tRNA ligase of Xylella fastidiosa (strain Temecula1 / ATCC 700964).